The chain runs to 550 residues: MPSRVLITSALPYANGPLHFGHIAGAYLPADVYARFRRLLGDDVLYICGSDEYGIAITLNAERVGLGYQEYVSMYHKVHKDTFDKLGISLDFFSRTTNPFHKAIVEDFYLELKSKGLVENQISFQLYSEDEKRFLADRYVEGTCPKCGFDGARGDECQKCGADYEATDLINPRSKLSGSQLVLKETEHAYFHLERMVEPLLAFIEKAYLPEHIRKFVVDYIKNLRPRAITRDLSWGIPVPDFPNKVFYVWFDAPIGYISATMDWAASVNTPDLWKDFWLEESTEYVQFIGKDNIPFHAAIFPAMELGQSIPYKKMNALISSEFYLLEGAQFSKSEGNFVDMDAFLDTYSLDKLRYVLAATAPETSDSEFTFLDFKTRCNSELVGKFGNFINRVLAFAEKNGFRELTCPEALEDKDRQFLDDCQRIVQEAQAYYSKYSLRKACSAIMELAALGNVYFNDQAPWKLLKEGFAHRVEAILFCACYCQKLLALIAYPILPGTAWEIWNMLAPKSLDLENQDKDRVKNLWNTEFIDFSDEVFSLTTPQLLFTIVD.

The short motif at 12–22 is the 'HIGH' region element; it reads PYANGPLHFGH. Cys-144, Cys-147, Cys-157, and Cys-160 together coordinate Zn(2+). The 'KMSKS' region motif lies at 330–334; sequence QFSKS. Lys-333 serves as a coordination point for ATP.

The protein belongs to the class-I aminoacyl-tRNA synthetase family. MetG type 1 subfamily. In terms of assembly, monomer. Requires Zn(2+) as cofactor.

Its subcellular location is the cytoplasm. The catalysed reaction is tRNA(Met) + L-methionine + ATP = L-methionyl-tRNA(Met) + AMP + diphosphate. Is required not only for elongation of protein synthesis but also for the initiation of all mRNA translation through initiator tRNA(fMet) aminoacylation. This chain is Methionine--tRNA ligase, found in Chlamydia caviae (strain ATCC VR-813 / DSM 19441 / 03DC25 / GPIC) (Chlamydophila caviae).